A 217-amino-acid polypeptide reads, in one-letter code: uncharacterized protein (217 aa).

A disordered region spans residues 1–32 (MTLKKHRGKMSEKSNVNKKFTNSTQNNSNWSN). A compositionally biased stretch (low complexity) spans 22–32 (NSTQNNSNWSN).

This is an uncharacterized protein from Acidianus filamentous virus 2 (isolate Italy/Pozzuoli) (AFV-2).